A 131-amino-acid chain; its full sequence is Interleukin-13 (131 aa).

Residues 1 to 18 (MALWVTAVLALACLGGLA) form the signal peptide. Residues Asn-42, Asn-53, Asn-76, and Asn-121 are each glycosylated (N-linked (GlcNAc...) asparagine). 2 cysteine pairs are disulfide-bonded: Cys-52–Cys-80 and Cys-68–Cys-94.

Belongs to the IL-4/IL-13 family. As to quaternary structure, interacts with IL13RA2.

It is found in the secreted. Cytokine that plays important roles in allergic inflammation and immune response to parasite infection. Synergizes with IL2 in regulating interferon-gamma synthesis. Stimulates B-cell proliferation, and activation of eosinophils, basophils, and mast cells. Plays an important role in controlling IL33 activity by modulating the production of transmembrane and soluble forms of interleukin-1 receptor-like 1/IL1RL1. Displays the capacity to antagonize Th1-driven proinflammatory immune response and downregulates synthesis of many proinflammatory cytokines including IL1, IL6, IL10, IL12 and TNF-alpha through a mechanism that partially involves suppression of NF-kappa-B. Also functions on nonhematopoietic cells, including endothelial cells where it induces vascular cell adhesion protein 1/VCAM1, which is important in the recruitment of eosinophils. Exerts its biological effects through its receptors which comprises the IL4R chain and the IL13RA1 chain, to activate JAK1 and TYK2, leading to the activation of STAT6. Aside from IL13RA1, another receptor IL13RA2 acts as a high affinity decoy for IL13 and mediates internalization and depletion of extracellular IL13. In Rattus norvegicus (Rat), this protein is Interleukin-13 (Il13).